The sequence spans 507 residues: ATP-dependent RNA helicase DDX47 (507 aa).

A compositionally biased stretch (acidic residues) spans 1 to 31 (MSETSEDEQTQLQTSDEEEDLGSEEEQEDED). The tract at residues 1–58 (MSETSEDEQTQLQTSDEEEDLGSEEEQEDEDNNHKEGDSEAALSGEDDKGSEDDAAEE) is disordered. The Q motif signature appears at 61 to 89 (LTWKDLGLNEALCQACDELKWKAPSKIQR). In terms of domain architecture, Helicase ATP-binding spans 92–263 (IPVALQGKDV…RASLKDPVKV (172 aa)). Residue 105–112 (AETGSGKT) coordinates ATP. The DEAD box motif lies at 211-214 (DEAD). The Helicase C-terminal domain maps to 290 to 434 (YLVHILNELA…LYKCEEDEVM (145 aa)). Positions 426-453 (YKCEEDEVMALQERVAEAQRTAKLELKD) form a coiled coil. Residues 451–471 (LKDLEDTRGGHKRGGDTHDDS) show a composition bias toward basic and acidic residues. Residues 451 to 507 (LKDLEDTRGGHKRGGDTHDDSENFTGARKRMKPMGGTGGGGRKSFGKKNWSKGKQKR) are disordered. Over residues 494 to 507 (SFGKKNWSKGKQKR) the composition is skewed to basic residues.

The protein belongs to the DEAD box helicase family. DDX47/RRP3 subfamily.

Its subcellular location is the nucleus. It localises to the nucleolus. The catalysed reaction is ATP + H2O = ADP + phosphate + H(+). Its function is as follows. Part of a translational control module, also containing ath/DHX33 and ais/DDX52, which coordinates germline stem cell differentiation with ribosome biogenesis during oogenesis. This module allows for coregulation of ribosomal proteins and non1/GTPBP4, a p53 repressor, preventing p53 stabilization, cell cycle arrest and loss of stem cell differentiation. With atos, adjusts transcription and translation of a subset of OXPHOS genes in macrophages to increase mitochondrial bioenergetics and allow tissue invasion. The protein is ATP-dependent RNA helicase DDX47 of Drosophila melanogaster (Fruit fly).